Consider the following 169-residue polypeptide: Probable chemoreceptor glutamine deamidase CheD (169 aa).

It belongs to the CheD family.

The catalysed reaction is L-glutaminyl-[protein] + H2O = L-glutamyl-[protein] + NH4(+). In terms of biological role, probably deamidates glutamine residues to glutamate on methyl-accepting chemotaxis receptors (MCPs), playing an important role in chemotaxis. This is Probable chemoreceptor glutamine deamidase CheD from Solibacter usitatus (strain Ellin6076).